A 535-amino-acid polypeptide reads, in one-letter code: Glutamate--cysteine ligase (535 aa).

It belongs to the glutamate--cysteine ligase type 1 family. Type 1 subfamily.

The enzyme catalyses L-cysteine + L-glutamate + ATP = gamma-L-glutamyl-L-cysteine + ADP + phosphate + H(+). The protein operates within sulfur metabolism; glutathione biosynthesis; glutathione from L-cysteine and L-glutamate: step 1/2. The chain is Glutamate--cysteine ligase from Pseudomonas syringae pv. syringae (strain B728a).